The primary structure comprises 353 residues: Photosystem II D2 protein (353 aa).

Residue T2 is modified to N-acetylthreonine. T2 bears the Phosphothreonine mark. A helical membrane pass occupies residues 41 to 61 (CAYFALGGWFTGTTFVTSWYT). H118 lines the chlorophyll a pocket. Residues 125-141 (GFMLRQFELARPVQLRP) form a helical membrane-spanning segment. Q130 and N143 together coordinate pheophytin a. Residues 153–166 (VFLSVFLIYPLGQS) form a helical membrane-spanning segment. H198 contacts chlorophyll a. Residues 208-228 (AVLLCAIHGATVENTLFEDGD) traverse the membrane as a helical segment. Residues H215 and F262 each contribute to the a plastoquinone site. H215 lines the Fe cation pocket. Residue H269 participates in Fe cation binding. Residues 279 to 295 (GLWMSAIGVVGLALNLR) form a helical membrane-spanning segment.

Belongs to the reaction center PufL/M/PsbA/D family. As to quaternary structure, PSII is composed of 1 copy each of membrane proteins PsbA, PsbB, PsbC, PsbD, PsbE, PsbF, PsbH, PsbI, PsbJ, PsbK, PsbL, PsbM, PsbT, PsbX, PsbY, PsbZ, Psb30/Ycf12, at least 3 peripheral proteins of the oxygen-evolving complex and a large number of cofactors. It forms dimeric complexes. The D1/D2 heterodimer binds P680, chlorophylls that are the primary electron donor of PSII, and subsequent electron acceptors. It shares a non-heme iron and each subunit binds pheophytin, quinone, additional chlorophylls, carotenoids and lipids. There is also a Cl(-1) ion associated with D1 and D2, which is required for oxygen evolution. The PSII complex binds additional chlorophylls, carotenoids and specific lipids. is required as a cofactor. In terms of processing, only phosphorylated in mesophyll cells, phosphorylation increases when cells are grown under high rather than low light regimes (70 vs 900 umol photons/m-2/s).

The protein localises to the plastid. It is found in the chloroplast thylakoid membrane. The catalysed reaction is 2 a plastoquinone + 4 hnu + 2 H2O = 2 a plastoquinol + O2. Photosystem II (PSII) is a light-driven water:plastoquinone oxidoreductase that uses light energy to abstract electrons from H(2)O, generating O(2) and a proton gradient subsequently used for ATP formation. It consists of a core antenna complex that captures photons, and an electron transfer chain that converts photonic excitation into a charge separation. The D1/D2 (PsbA/PsbD) reaction center heterodimer binds P680, the primary electron donor of PSII as well as several subsequent electron acceptors. D2 is needed for assembly of a stable PSII complex. In Zea mays (Maize), this protein is Photosystem II D2 protein.